Here is a 135-residue protein sequence, read N- to C-terminus: Aspartate 1-decarboxylase (135 aa).

S25 (schiff-base intermediate with substrate; via pyruvic acid) is an active-site residue. The residue at position 25 (S25) is a Pyruvic acid (Ser). T57 contributes to the substrate binding site. Y58 acts as the Proton donor in catalysis. A substrate-binding site is contributed by 73-75 (GSA).

It belongs to the PanD family. As to quaternary structure, heterooctamer of four alpha and four beta subunits. Pyruvate serves as cofactor. Is synthesized initially as an inactive proenzyme, which is activated by self-cleavage at a specific serine bond to produce a beta-subunit with a hydroxyl group at its C-terminus and an alpha-subunit with a pyruvoyl group at its N-terminus.

It localises to the cytoplasm. It carries out the reaction L-aspartate + H(+) = beta-alanine + CO2. Its pathway is cofactor biosynthesis; (R)-pantothenate biosynthesis; beta-alanine from L-aspartate: step 1/1. In terms of biological role, catalyzes the pyruvoyl-dependent decarboxylation of aspartate to produce beta-alanine. The polypeptide is Aspartate 1-decarboxylase (Albidiferax ferrireducens (strain ATCC BAA-621 / DSM 15236 / T118) (Rhodoferax ferrireducens)).